Here is a 96-residue protein sequence, read N- to C-terminus: MDYTQILIKPLVSEKATFVKESSEQVVFFVNPRANKIEIKKAVESVFNVKVAGVNVVTRKPQARTKHGRVTGQTAGYKKAYVTLAPGEKIDFFEGV.

The protein belongs to the universal ribosomal protein uL23 family. As to quaternary structure, part of the 50S ribosomal subunit. Contacts protein L29, and trigger factor when it is bound to the ribosome.

In terms of biological role, one of the early assembly proteins it binds 23S rRNA. One of the proteins that surrounds the polypeptide exit tunnel on the outside of the ribosome. Forms the main docking site for trigger factor binding to the ribosome. In Oleidesulfovibrio alaskensis (strain ATCC BAA-1058 / DSM 17464 / G20) (Desulfovibrio alaskensis), this protein is Large ribosomal subunit protein uL23.